Reading from the N-terminus, the 393-residue chain is Chorismate synthase (393 aa).

Arg-40 and Arg-46 together coordinate NADP(+). Residues Arg-129–Ser-131, Gln-250–Ala-251, Gly-301, Lys-316–Thr-320, and Arg-342 each bind FMN.

Belongs to the chorismate synthase family. In terms of assembly, homotetramer. Requires FMNH2 as cofactor.

The enzyme catalyses 5-O-(1-carboxyvinyl)-3-phosphoshikimate = chorismate + phosphate. It functions in the pathway metabolic intermediate biosynthesis; chorismate biosynthesis; chorismate from D-erythrose 4-phosphate and phosphoenolpyruvate: step 7/7. In terms of biological role, catalyzes the anti-1,4-elimination of the C-3 phosphate and the C-6 proR hydrogen from 5-enolpyruvylshikimate-3-phosphate (EPSP) to yield chorismate, which is the branch point compound that serves as the starting substrate for the three terminal pathways of aromatic amino acid biosynthesis. This reaction introduces a second double bond into the aromatic ring system. The sequence is that of Chorismate synthase from Acidobacterium capsulatum (strain ATCC 51196 / DSM 11244 / BCRC 80197 / JCM 7670 / NBRC 15755 / NCIMB 13165 / 161).